Here is a 994-residue protein sequence, read N- to C-terminus: Alanine--tRNA ligase, chloroplastic/mitochondrial (994 aa).

Residues 1-29 are disordered; it reads MGGLKLPPQTLHGIHGGRRPLTAPSSKPS. Residues H672, H676, C774, and H778 each coordinate Zn(2+).

Belongs to the class-II aminoacyl-tRNA synthetase family. As to quaternary structure, monomer. Requires Zn(2+) as cofactor.

The protein localises to the plastid. The protein resides in the chloroplast. It localises to the mitochondrion. It carries out the reaction tRNA(Ala) + L-alanine + ATP = L-alanyl-tRNA(Ala) + AMP + diphosphate. Its function is as follows. Catalyzes the attachment of alanine to tRNA(Ala) in a two-step reaction: alanine is first activated by ATP to form Ala-AMP and then transferred to the acceptor end of tRNA(Ala). Also edits incorrectly charged tRNA(Ala) via its editing domain. The protein is Alanine--tRNA ligase, chloroplastic/mitochondrial of Populus trichocarpa (Western balsam poplar).